The sequence spans 217 residues: Large ribosomal subunit protein uL1 (217 aa).

The protein belongs to the universal ribosomal protein uL1 family.

This Spodoptera frugiperda (Fall armyworm) protein is Large ribosomal subunit protein uL1 (RpL10A).